Reading from the N-terminus, the 222-residue chain is Gamma-glutamyl cyclotransferase gliK (222 aa).

2 consecutive transmembrane segments (helical) span residues 154 to 174 and 187 to 207; these read GWWFQLGVALFLWPWTRAAII and GHVPAWFLFIFDCLLWLMWAQ.

The protein belongs to the class-I pyridoxal-phosphate-dependent aminotransferase family.

It localises to the membrane. It catalyses the reaction an alpha-(gamma-L-glutamyl)-L-amino acid = 5-oxo-L-proline + an L-alpha-amino acid. It participates in secondary metabolite biosynthesis. In terms of biological role, gamma-glutamyl cyclotransferase; part of the gene cluster that mediates the biosynthesis of an unusual class of epipolythiodioxopiperazines (ETPs) lacking the reactive thiol group important for toxicity. Firstly, L-tyrosine is prenylated by tcpD, before undergoing condensation with L-glycine in a reaction catalyzed by the NRPS tcpP leading to the diketopiperazine (DKP) backbone. Afterwards the alpha-carbon of tyrosine is oxidized by the cytochrome P450 tcpC to form a hydroxyl group. However, in contrast other ETP biosynthesis pathways studied so far, tcpC is not able to bishydroxylate the DKP at both alpha-carbon positions, but hydroxylates the alpha-carbon of the tyrosine part and the nitrogen of the glycine part. The next steps involve an alpha,beta-elimination reaction catalyzed by tcpI, a methylation by the methyltransferase tcpN the action of the four enzyme cascade tcpG/K/J/I. Due to a dysfunctional cytochrome P450 monooxygenase tcpC, the pathway leads to the biosynthesis of probable non-toxic metabolites lacking the reactive thiol group. This is Gamma-glutamyl cyclotransferase gliK from Claviceps purpurea (strain 20.1) (Ergot fungus).